A 440-amino-acid polypeptide reads, in one-letter code: G-protein coupled receptor family C group 5 member C (440 aa).

Residues 1–22 form the signal peptide; that stretch reads MATHRTLLMCLGLPLFFPGALA. The Extracellular segment spans residues 23 to 49; that stretch reads QNHAPPGCSPDLDPLYYNLCDRSGAWG. A helical transmembrane segment spans residues 50 to 70; that stretch reads IVSEAVAGAGIITTFVLTIIL. Topologically, residues 71–84 are cytoplasmic; that stretch reads VASLPFVQDTKKRS. A helical transmembrane segment spans residues 85–105; that stretch reads LLGTQVFFLLGTLGLFCLVFA. Over 106–119 the chain is Extracellular; it reads CVVKPDFSTCASRR. Residues 120–140 traverse the membrane as a helical segment; that stretch reads FLFGVLFAICFSCLVAHVLSL. At 141–155 the chain is on the cytoplasmic side; that stretch reads NFLTRKNHGPRGWVI. A helical membrane pass occupies residues 156 to 176; sequence FTVALLLTLVEVIINTEWLII. Over 177-207 the chain is Extracellular; sequence TLVRGGGQVSPLGNVSADSTMTSPCAIANMD. A glycan (N-linked (GlcNAc...) asparagine) is linked at N190. The chain crosses the membrane as a helical span at residues 208-228; the sequence is FVMALIYVMLLLLTAFLGAWP. Residues 229–240 lie on the Cytoplasmic side of the membrane; that stretch reads TLCGRFKRWRKH. A helical transmembrane segment spans residues 241–261; that stretch reads GVFVLLTTVISIAIWVVWIVM. Residues 262 to 278 are Extracellular-facing; the sequence is YTYGNEQHHSPTWDDPT. The chain crosses the membrane as a helical span at residues 279 to 299; the sequence is LAIALAANAWTFVLFYVIPEV. Residues 300-440 lie on the Cytoplasmic side of the membrane; the sequence is SQVTKPSPEQ…QVFRNPYVWD (141 aa). A phosphoserine mark is found at S343, S382, S402, and S405. At Y413 the chain carries Phosphotyrosine. T422 is subject to Phosphothreonine.

This sequence belongs to the G-protein coupled receptor 3 family.

It localises to the cell membrane. This retinoic acid-inducible G-protein coupled receptor provide evidence for a possible interaction between retinoid and G-protein signaling pathways. This chain is G-protein coupled receptor family C group 5 member C (Gprc5c), found in Mus musculus (Mouse).